The primary structure comprises 445 residues: Zinc finger protein 296 (445 aa).

The span at 1–10 (MSRRKAGRVP) shows a compositional bias: basic residues. The tract at residues 1–20 (MSRRKAGRVPRRVDPDTDTD) is disordered. K31 participates in a covalent cross-link: Glycyl lysine isopeptide (Lys-Gly) (interchain with G-Cter in SUMO2). The interval 62 to 88 (SRPLGAPSTCAPRMPLSSKSSDRQPWT) is disordered. 3 C2H2-type zinc fingers span residues 138–161 (LSCL…QWDH), 212–234 (PTCD…MRSH), and 240–262 (YSCD…KKTH). The interval 256 to 359 (NRHKKTHRQL…TAPRKSHGPG (104 aa)) is disordered. Positions 269–278 (SPSTSASSRG) are enriched in polar residues. The segment covering 320–332 (PGSGAQGGPGFVG) has biased composition (gly residues). The span at 338-351 (KVERTDPVKIEKTA) shows a compositional bias: basic and acidic residues. 3 consecutive C2H2-type zinc fingers follow at residues 360-382 (GKCE…RRSH), 388-410 (YTCD…RRTH), and 418-441 (VKCP…RQKH).

It belongs to the krueppel C2H2-type zinc-finger protein family. In terms of assembly, interacts with KLF4. As to expression, strongly expressed in testis and embryonic stem cells.

The protein resides in the nucleus. In terms of biological role, may be a transcriptional corepressor with KLF4. The sequence is that of Zinc finger protein 296 from Mus musculus (Mouse).